Consider the following 432-residue polypeptide: MILLRASEVRQLLHNKFVVILGDSVHRAVYKDLVLLLQKDRLLTPGQLRARGELNFEQDELVDGGQRGHMHNGLNYREVREFRSDHHLVRFYFLTRVYSDYLQTILKELQSGEHAPDLVIMNSCLWDISRYGPNSWRSYLENLENLFQCLGQVLPESCLLVWNTAMPVGEEVTGGFLPPKLRRQKATFLKNEVVKANFHSATEARKHNFDVLDLHFHFRHARENLHWDGVHWNGRVHRCLSQLLLAHVADAWGVELPHRHPVGEWIKKKKPGPRVEGPPQANRNHPALPLSPPLPSPTYRPLLGFPPQRLPLLPLLSPQPPPPILHHQGMPRFPQGPPDACFSSDHTFQSDQFYCHSDVPSSAHAGFFVEDNFMVGPQLPMPFFPTPRYQRPAPVVHRGFGRYRPRGPYTPWGQRPRPSKRRAPANPEPRPQ.

Disordered stretches follow at residues 264 to 293 (EWIK…LSPP) and 398 to 432 (RGFG…PRPQ).

Belongs to the PC-esterase family.

This is PC-esterase domain-containing protein 1B from Homo sapiens (Human).